We begin with the raw amino-acid sequence, 34 residues long: Photosystem II reaction center protein M (34 aa).

A helical membrane pass occupies residues 5–25 (ILAFIATALFILIPTAFLLIL).

Belongs to the PsbM family. PSII is composed of 1 copy each of membrane proteins PsbA, PsbB, PsbC, PsbD, PsbE, PsbF, PsbH, PsbI, PsbJ, PsbK, PsbL, PsbM, PsbT, PsbX, PsbY, PsbZ, Psb30/Ycf12, at least 3 peripheral proteins of the oxygen-evolving complex and a large number of cofactors. It forms dimeric complexes.

It localises to the plastid. The protein localises to the chloroplast thylakoid membrane. In terms of biological role, one of the components of the core complex of photosystem II (PSII). PSII is a light-driven water:plastoquinone oxidoreductase that uses light energy to abstract electrons from H(2)O, generating O(2) and a proton gradient subsequently used for ATP formation. It consists of a core antenna complex that captures photons, and an electron transfer chain that converts photonic excitation into a charge separation. This subunit is found at the monomer-monomer interface. The polypeptide is Photosystem II reaction center protein M (Anthoceros angustus (Hornwort)).